The chain runs to 109 residues: Nucleoid-associated protein Sbal223_1770 (109 aa).

Belongs to the YbaB/EbfC family. In terms of assembly, homodimer.

The protein resides in the cytoplasm. It localises to the nucleoid. Functionally, binds to DNA and alters its conformation. May be involved in regulation of gene expression, nucleoid organization and DNA protection. The chain is Nucleoid-associated protein Sbal223_1770 from Shewanella baltica (strain OS223).